A 382-amino-acid chain; its full sequence is Succinate--CoA ligase [ADP-forming] subunit beta (382 aa).

An ATP-grasp domain is found at 9–240 (KELLKKYGLP…ITQIDPLEVE (232 aa)). ATP-binding residues include Lys-46, Glu-98, Thr-101, and Glu-106. The Mg(2+) site is built by Asn-195 and Asp-209. Substrate is bound by residues Asn-260 and 317–319 (GIL).

This sequence belongs to the succinate/malate CoA ligase beta subunit family. As to quaternary structure, heterotetramer of two alpha and two beta subunits. Mg(2+) is required as a cofactor.

The catalysed reaction is succinate + ATP + CoA = succinyl-CoA + ADP + phosphate. The enzyme catalyses GTP + succinate + CoA = succinyl-CoA + GDP + phosphate. The protein operates within carbohydrate metabolism; tricarboxylic acid cycle; succinate from succinyl-CoA (ligase route): step 1/1. Functionally, succinyl-CoA synthetase functions in the citric acid cycle (TCA), coupling the hydrolysis of succinyl-CoA to the synthesis of either ATP or GTP and thus represents the only step of substrate-level phosphorylation in the TCA. The beta subunit provides nucleotide specificity of the enzyme and binds the substrate succinate, while the binding sites for coenzyme A and phosphate are found in the alpha subunit. This Hydrogenobaculum sp. (strain Y04AAS1) protein is Succinate--CoA ligase [ADP-forming] subunit beta.